A 180-amino-acid polypeptide reads, in one-letter code: Translation initiation factor IF-3 (180 aa).

The protein belongs to the IF-3 family. Monomer.

The protein resides in the cytoplasm. IF-3 binds to the 30S ribosomal subunit and shifts the equilibrium between 70S ribosomes and their 50S and 30S subunits in favor of the free subunits, thus enhancing the availability of 30S subunits on which protein synthesis initiation begins. In Shewanella oneidensis (strain ATCC 700550 / JCM 31522 / CIP 106686 / LMG 19005 / NCIMB 14063 / MR-1), this protein is Translation initiation factor IF-3.